Here is a 1391-residue protein sequence, read N- to C-terminus: DNA-directed RNA polymerase subunit beta' (1391 aa).

4 residues coordinate Zn(2+): Cys72, Cys74, Cys87, and Cys90. Residues Asp462, Asp464, and Asp466 each coordinate Mg(2+). Zn(2+) contacts are provided by Cys816, Cys890, Cys897, and Cys900.

Belongs to the RNA polymerase beta' chain family. In terms of assembly, the RNAP catalytic core consists of 2 alpha, 1 beta, 1 beta' and 1 omega subunit. When a sigma factor is associated with the core the holoenzyme is formed, which can initiate transcription. Requires Mg(2+) as cofactor. Zn(2+) serves as cofactor.

It carries out the reaction RNA(n) + a ribonucleoside 5'-triphosphate = RNA(n+1) + diphosphate. Functionally, DNA-dependent RNA polymerase catalyzes the transcription of DNA into RNA using the four ribonucleoside triphosphates as substrates. The protein is DNA-directed RNA polymerase subunit beta' of Neisseria gonorrhoeae (strain NCCP11945).